We begin with the raw amino-acid sequence, 490 residues long: Histone-lysine N-methyltransferase SMYD1 (490 aa).

The SET domain occupies 7 to 253 (ENVEVFTAEG…EGEELTVSYI (247 aa)). 17-19 (KGR) provides a ligand contact to S-adenosyl-L-methionine. The Zn(2+) site is built by cysteine 52, cysteine 55, cysteine 65, cysteine 68, cysteine 74, cysteine 78, histidine 86, and cysteine 90. The MYND-type zinc-finger motif lies at 52–90 (CHTCFKRQEKLHRCGQCKFAHYCDRTCQKDAWLNHKNEC). Residues histidine 135 and 205–206 (NH) contribute to the S-adenosyl-L-methionine site. Cysteine 208 is a binding site for Zn(2+). S-adenosyl-L-methionine is bound at residue 270–272 (YYF). Residues cysteine 274, cysteine 276, and cysteine 279 each coordinate Zn(2+).

The protein belongs to the class V-like SAM-binding methyltransferase superfamily. Interacts with HDAC1, HDAC2 and HDAC3. Interacts (via MYND-type zinc finger) with NACA isoform skNAC. As to expression, expression seems mostly restricted to heart and skeletal muscle.

It localises to the cytoplasm. Its subcellular location is the nucleus. The catalysed reaction is L-lysyl(4)-[histone H3] + 3 S-adenosyl-L-methionine = N(6),N(6),N(6)-trimethyl-L-lysyl(4)-[histone H3] + 3 S-adenosyl-L-homocysteine + 3 H(+). Methylates histone H3 at 'Lys-4' (H3K4me), seems able to perform both mono-, di-, and trimethylation. Acts as a transcriptional repressor. Essential for cardiomyocyte differentiation and cardiac morphogenesis. This Homo sapiens (Human) protein is Histone-lysine N-methyltransferase SMYD1 (SMYD1).